The following is a 324-amino-acid chain: tRNA pseudouridine synthase B (324 aa).

Aspartate 49 acts as the Nucleophile in catalysis. The tract at residues 87-107 (RSTDDLEGQPTKTSDKRPSRE) is disordered.

The protein belongs to the pseudouridine synthase TruB family. Type 1 subfamily.

It carries out the reaction uridine(55) in tRNA = pseudouridine(55) in tRNA. Its function is as follows. Responsible for synthesis of pseudouridine from uracil-55 in the psi GC loop of transfer RNAs. This is tRNA pseudouridine synthase B from Brucella canis (strain ATCC 23365 / NCTC 10854 / RM-666).